Reading from the N-terminus, the 479-residue chain is CBL-interacting serine/threonine-protein kinase 10 (479 aa).

One can recognise a Protein kinase domain in the interval 12-266; sequence YDVGRLLGQG…IARIRESSWF (255 aa). ATP contacts are provided by residues 18 to 26 and K41; that span reads LGQGTFAKV. D134 functions as the Proton acceptor in the catalytic mechanism. The tract at residues 152–181 is activation loop; the sequence is DFGLSALADCKRQDGLLHTTCGTPAYVAPE. Position 156 is a phosphoserine (S156). The residue at position 170 (T170) is a Phosphothreonine. The tract at residues 286–323 is disordered; the sequence is SVEAGTAGTNENGAGPSENGAGPSENGDRVTEENHTDE. Residues 288-300 are compositionally biased toward low complexity; the sequence is EAGTAGTNENGAG. A compositionally biased stretch (basic and acidic residues) spans 311-323; that stretch reads NGDRVTEENHTDE. Positions 322 to 346 constitute an NAF domain; the sequence is DEPTNLNAFDLIALSAGFDLAGLFG. The segment at 350 to 379 is PPI; the sequence is KRESRFTSQKPASVIISKLEEVAQRLKLSI. A disordered region spans residues 456–479; sequence SQQETEYQQQQQQEQQEQEEPLKF. Positions 457-470 are enriched in low complexity; the sequence is QQETEYQQQQQQEQ.

This sequence belongs to the protein kinase superfamily. CAMK Ser/Thr protein kinase family. SNF1 subfamily. In terms of assembly, interacts with CBL4/SOS3. Mn(2+) serves as cofactor. Mostly expressed in roots.

The catalysed reaction is L-seryl-[protein] + ATP = O-phospho-L-seryl-[protein] + ADP + H(+). It catalyses the reaction L-threonyl-[protein] + ATP = O-phospho-L-threonyl-[protein] + ADP + H(+). CIPK serine-threonine protein kinases interact with CBL proteins. Binding of a CBL protein to the regulatory NAF domain of CIPK protein lead to the activation of the kinase in a calcium-dependent manner. This is CBL-interacting serine/threonine-protein kinase 10 (CIPK10) from Arabidopsis thaliana (Mouse-ear cress).